Here is a 501-residue protein sequence, read N- to C-terminus: Lysine--tRNA ligase (501 aa).

Mg(2+) is bound by residues Glu412 and Glu419.

Belongs to the class-II aminoacyl-tRNA synthetase family. In terms of assembly, homodimer. It depends on Mg(2+) as a cofactor.

The protein resides in the cytoplasm. The catalysed reaction is tRNA(Lys) + L-lysine + ATP = L-lysyl-tRNA(Lys) + AMP + diphosphate. The protein is Lysine--tRNA ligase of Chlorobium luteolum (strain DSM 273 / BCRC 81028 / 2530) (Pelodictyon luteolum).